Here is a 258-residue protein sequence, read N- to C-terminus: L-aminoadipate-semialdehyde dehydrogenase-phosphopantetheinyl transferase (258 aa).

Belongs to the P-Pant transferase superfamily. AcpS family.

The protein resides in the cytoplasm. It localises to the nucleus. It catalyses the reaction apo-[ACP] + CoA = holo-[ACP] + adenosine 3',5'-bisphosphate + H(+). Catalyzes the transfer of a 4'-phosphopantetheine moiety from coenzyme A to a serine residue of acceptor proteins, such as alpha-aminoadipate reductase. Necessary for alpha-aminoadipate reductase activity. This Schizosaccharomyces pombe (strain 972 / ATCC 24843) (Fission yeast) protein is L-aminoadipate-semialdehyde dehydrogenase-phosphopantetheinyl transferase (lys7).